Here is a 356-residue protein sequence, read N- to C-terminus: Glutamine synthetase nodule isozyme (356 aa).

The 81-residue stretch at 19–99 folds into the GS beta-grasp domain; it reads IIAEYIWVGG…VICDVYTPAG (81 aa). Positions 106 to 356 constitute a GS catalytic domain; it reads KRHNAAKIFS…IAETTLLWKP (251 aa).

Belongs to the glutamine synthetase family. Homooctamer. As to expression, found at highest levels in root nodules.

The protein resides in the cytoplasm. The enzyme catalyses L-glutamate + NH4(+) + ATP = L-glutamine + ADP + phosphate + H(+). This chain is Glutamine synthetase nodule isozyme (GS1), found in Medicago sativa (Alfalfa).